We begin with the raw amino-acid sequence, 196 residues long: FMN-dependent NADH:quinone oxidoreductase (196 aa).

FMN contacts are provided by residues Ser10 and 17 to 19 (SYS).

Belongs to the azoreductase type 1 family. Homodimer. Requires FMN as cofactor.

The catalysed reaction is 2 a quinone + NADH + H(+) = 2 a 1,4-benzosemiquinone + NAD(+). It catalyses the reaction N,N-dimethyl-1,4-phenylenediamine + anthranilate + 2 NAD(+) = 2-(4-dimethylaminophenyl)diazenylbenzoate + 2 NADH + 2 H(+). Quinone reductase that provides resistance to thiol-specific stress caused by electrophilic quinones. In terms of biological role, also exhibits azoreductase activity. Catalyzes the reductive cleavage of the azo bond in aromatic azo compounds to the corresponding amines. The sequence is that of FMN-dependent NADH:quinone oxidoreductase from Metamycoplasma arthritidis (strain 158L3-1) (Mycoplasma arthritidis).